The following is a 129-amino-acid chain: Translation initiation factor 5A (129 aa).

A Hypusine modification is found at K36.

Belongs to the eIF-5A family.

The protein localises to the cytoplasm. Its function is as follows. Functions by promoting the formation of the first peptide bond. This Picrophilus torridus (strain ATCC 700027 / DSM 9790 / JCM 10055 / NBRC 100828 / KAW 2/3) protein is Translation initiation factor 5A.